The following is a 308-amino-acid chain: Acetyl-coenzyme A carboxylase carboxyl transferase subunit beta (308 aa).

The CoA carboxyltransferase N-terminal domain occupies 26-295; it reads LWIKDPETGE…EQKPLEPEIL (270 aa).

Belongs to the AccD/PCCB family. In terms of assembly, acetyl-CoA carboxylase is a heterohexamer composed of biotin carboxyl carrier protein (AccB), biotin carboxylase (AccC) and two subunits each of ACCase subunit alpha (AccA) and ACCase subunit beta (AccD).

The protein localises to the cytoplasm. It catalyses the reaction N(6)-carboxybiotinyl-L-lysyl-[protein] + acetyl-CoA = N(6)-biotinyl-L-lysyl-[protein] + malonyl-CoA. It participates in lipid metabolism; malonyl-CoA biosynthesis; malonyl-CoA from acetyl-CoA: step 1/1. In terms of biological role, component of the acetyl coenzyme A carboxylase (ACC) complex. Biotin carboxylase (BC) catalyzes the carboxylation of biotin on its carrier protein (BCCP) and then the CO(2) group is transferred by the transcarboxylase to acetyl-CoA to form malonyl-CoA. This is Acetyl-coenzyme A carboxylase carboxyl transferase subunit beta from Mesorhizobium japonicum (strain LMG 29417 / CECT 9101 / MAFF 303099) (Mesorhizobium loti (strain MAFF 303099)).